The following is a 547-amino-acid chain: CTP synthase (547 aa).

An amidoligase domain region spans residues 1–269; it reads MKTKFIFVTG…DQKVAIMLRL (269 aa). Ser14 provides a ligand contact to CTP. Residue Ser14 participates in UTP binding. Residues 15 to 20 and Asp72 contribute to the ATP site; that span reads SLGKGL. Mg(2+) is bound by residues Asp72 and Glu143. Residues 150–152, 190–195, and Lys226 each bind CTP; these read DIE and KTKPTQ. UTP-binding positions include 190 to 195 and Lys226; that span reads KTKPTQ. One can recognise a Glutamine amidotransferase type-1 domain in the interval 294-547; that stretch reads TVAIVGKYVD…IGAAKKHAKV (254 aa). Gly356 is an L-glutamine binding site. Catalysis depends on Cys383, which acts as the Nucleophile; for glutamine hydrolysis. L-glutamine contacts are provided by residues 384–387, Glu407, and Arg475; that span reads LGMQ. Active-site residues include His520 and Glu522.

This sequence belongs to the CTP synthase family. As to quaternary structure, homotetramer.

The enzyme catalyses UTP + L-glutamine + ATP + H2O = CTP + L-glutamate + ADP + phosphate + 2 H(+). It catalyses the reaction L-glutamine + H2O = L-glutamate + NH4(+). The catalysed reaction is UTP + NH4(+) + ATP = CTP + ADP + phosphate + 2 H(+). The protein operates within pyrimidine metabolism; CTP biosynthesis via de novo pathway; CTP from UDP: step 2/2. With respect to regulation, allosterically activated by GTP, when glutamine is the substrate; GTP has no effect on the reaction when ammonia is the substrate. The allosteric effector GTP functions by stabilizing the protein conformation that binds the tetrahedral intermediate(s) formed during glutamine hydrolysis. Inhibited by the product CTP, via allosteric rather than competitive inhibition. Its function is as follows. Catalyzes the ATP-dependent amination of UTP to CTP with either L-glutamine or ammonia as the source of nitrogen. Regulates intracellular CTP levels through interactions with the four ribonucleotide triphosphates. The sequence is that of CTP synthase from Desulfovibrio desulfuricans (strain ATCC 27774 / DSM 6949 / MB).